The primary structure comprises 172 residues: Bacilliredoxin SRU_0242 (172 aa).

The interval 141–172 (TDEAPPSDAPSRPDLSSSPNAGGLPSTFQSIS) is disordered. Polar residues predominate over residues 154–172 (DLSSSPNAGGLPSTFQSIS).

Belongs to the bacilliredoxin family.

The chain is Bacilliredoxin SRU_0242 from Salinibacter ruber (strain DSM 13855 / M31).